The following is a 484-amino-acid chain: Probable glycine dehydrogenase (decarboxylating) subunit 2 (484 aa).

The residue at position 270 (lysine 270) is an N6-(pyridoxal phosphate)lysine.

Belongs to the GcvP family. C-terminal subunit subfamily. In terms of assembly, the glycine cleavage system is composed of four proteins: P, T, L and H. In this organism, the P 'protein' is a heterodimer of two subunits. Requires pyridoxal 5'-phosphate as cofactor.

The enzyme catalyses N(6)-[(R)-lipoyl]-L-lysyl-[glycine-cleavage complex H protein] + glycine + H(+) = N(6)-[(R)-S(8)-aminomethyldihydrolipoyl]-L-lysyl-[glycine-cleavage complex H protein] + CO2. Its function is as follows. The glycine cleavage system catalyzes the degradation of glycine. The P protein binds the alpha-amino group of glycine through its pyridoxal phosphate cofactor; CO(2) is released and the remaining methylamine moiety is then transferred to the lipoamide cofactor of the H protein. The polypeptide is Probable glycine dehydrogenase (decarboxylating) subunit 2 (Desulforamulus reducens (strain ATCC BAA-1160 / DSM 100696 / MI-1) (Desulfotomaculum reducens)).